A 227-amino-acid polypeptide reads, in one-letter code: Phosphatidylserine decarboxylase proenzyme (227 aa).

The active-site Schiff-base intermediate with substrate; via pyruvic acid is S181. Position 181 is a pyruvic acid (Ser); by autocatalysis (S181).

It belongs to the phosphatidylserine decarboxylase family. PSD-A subfamily. In terms of assembly, heterodimer of a large membrane-associated beta subunit and a small pyruvoyl-containing alpha subunit. Pyruvate serves as cofactor. Is synthesized initially as an inactive proenzyme. Formation of the active enzyme involves a self-maturation process in which the active site pyruvoyl group is generated from an internal serine residue via an autocatalytic post-translational modification. Two non-identical subunits are generated from the proenzyme in this reaction, and the pyruvate is formed at the N-terminus of the alpha chain, which is derived from the carboxyl end of the proenzyme. The post-translation cleavage follows an unusual pathway, termed non-hydrolytic serinolysis, in which the side chain hydroxyl group of the serine supplies its oxygen atom to form the C-terminus of the beta chain, while the remainder of the serine residue undergoes an oxidative deamination to produce ammonia and the pyruvoyl prosthetic group on the alpha chain.

The protein resides in the cell membrane. It carries out the reaction a 1,2-diacyl-sn-glycero-3-phospho-L-serine + H(+) = a 1,2-diacyl-sn-glycero-3-phosphoethanolamine + CO2. It participates in phospholipid metabolism; phosphatidylethanolamine biosynthesis; phosphatidylethanolamine from CDP-diacylglycerol: step 2/2. Catalyzes the formation of phosphatidylethanolamine (PtdEtn) from phosphatidylserine (PtdSer). In Anaplasma phagocytophilum (strain HZ), this protein is Phosphatidylserine decarboxylase proenzyme.